Here is a 333-residue protein sequence, read N- to C-terminus: tRNA uridine(34) hydroxylase (333 aa).

The Rhodanese domain occupies 123 to 217 (SDPEVILVDT…YLEEIKQEES (95 aa)). Residue Cys177 is the Cysteine persulfide intermediate of the active site.

Belongs to the TrhO family.

The catalysed reaction is uridine(34) in tRNA + AH2 + O2 = 5-hydroxyuridine(34) in tRNA + A + H2O. In terms of biological role, catalyzes oxygen-dependent 5-hydroxyuridine (ho5U) modification at position 34 in tRNAs. This Shewanella sp. (strain MR-7) protein is tRNA uridine(34) hydroxylase.